Here is a 293-residue protein sequence, read N- to C-terminus: Kallikrein-5 (293 aa).

The signal sequence occupies residues 1 to 22 (MATARPPWMWVLCALITALLLG). Residues 37-49 (HPSNTVPSGSNQD) show a composition bias toward polar residues. The tract at residues 37–68 (HPSNTVPSGSNQDLGAGAGEDARSDDSSSRII) is disordered. Positions 67-290 (IINGSDCDMH…FTKWIQETIQ (224 aa)) constitute a Peptidase S1 domain. N-linked (GlcNAc...) asparagine glycosylation occurs at Asn69. 6 cysteine pairs are disulfide-bonded: Cys73–Cys206, Cys93–Cys109, Cys178–Cys279, Cys185–Cys251, Cys217–Cys231, and Cys241–Cys266. Catalysis depends on charge relay system residues His108 and Asp153. N-linked (GlcNAc...) asparagine glycosylation is found at Asn173 and Asn208. Ser245 (charge relay system) is an active-site residue. Residue Asn252 is glycosylated (N-linked (GlcNAc...) asparagine).

Belongs to the peptidase S1 family. Kallikrein subfamily. As to quaternary structure, interacts with SPINK9. Expressed in skin, breast, brain and testis. Expressed at the stratum granulosum of palmar skin.

The protein resides in the secreted. With respect to regulation, inhibited by Zn2+. May be involved in desquamation. This Homo sapiens (Human) protein is Kallikrein-5.